A 255-amino-acid chain; its full sequence is 5'-nucleotidase SurE (255 aa).

Residues D8, D9, S40, and N93 each coordinate a divalent metal cation.

This sequence belongs to the SurE nucleotidase family. The cofactor is a divalent metal cation.

It localises to the cytoplasm. The catalysed reaction is a ribonucleoside 5'-phosphate + H2O = a ribonucleoside + phosphate. Nucleotidase that shows phosphatase activity on nucleoside 5'-monophosphates. In Rhodopseudomonas palustris (strain ATCC BAA-98 / CGA009), this protein is 5'-nucleotidase SurE.